The chain runs to 607 residues: MEVTGRLFIWAILAVSCGAQLNSTEAEGKSRCTASLGGANLGETHKALVLQLSANENCTWTIERPENRSIRIIFSYIKLDPGSRCETENIKVFDGSSTSGPLLGKACSRNDFVPVFESSSNSMTFQIVTGLTKFPRSVFIFYYFFSAATVIPNCGGDLRALEGSFSSPNYPKPHPELAYCVWHIQVGKGYKIQLKFTDLLLEMDENCKFDFIAVYDGPSTTAGLLKQLCGRGKPTLESSSDAMTVVLSTDYANSYKGFSASYTSIYIHDVNTTSLSCVSDKMRVIISKSYLPALNYNESNLQLNDPTCRPNVSNVIEFSIPLHECGTVKKIEDHAISYTNRITFIESPVSAVITRQKLLQIVVTCEMEYNSTVEIMYITEDDIIQNQSVLGKYNTSLALYESDSFENLVQESPYYVDLNQTLFVQATLHTSDPSLVVFLDTCRASPTSDFASPTYDLISSGCCQDETCKVYPLFGHYGRFQFNAFKFLKHLNSVYLKCKILICDNNDQTSRCNQGCVPRRKRDIPSYKWKTDSVIGPIRLKRDRSASRDSGLLPQIHEAEISNQPLSRLYLFSFMVLALNVVIVAITTVKHFLNRWMDHRYQKLQVY.

An N-terminal signal peptide occupies residues 1–19 (MEVTGRLFIWAILAVSCGA). Cys-17 and Cys-58 are disulfide-bonded. CUB domains follow at residues 20–146 (QLNS…YFFS) and 154–265 (CGGD…YTSI). Over 20–568 (QLNSTEAEGK…AEISNQPLSR (549 aa)) the chain is Lumenal. Asn-22, Asn-57, and Asn-67 each carry an N-linked (GlcNAc...) asparagine glycan. 3 cysteine pairs are disulfide-bonded: Cys-85–Cys-107, Cys-154–Cys-180, and Cys-207–Cys-229. The ZP domain occupies 276–519 (SCVSDKMRVI…SRCNQGCVPR (244 aa)). An N-linked (GlcNAc...) asparagine glycan is attached at Asn-419. A disulfide bridge links Cys-442 with Cys-498. A helical membrane pass occupies residues 569-589 (LYLFSFMVLALNVVIVAITTV). At 590 to 607 (KHFLNRWMDHRYQKLQVY) the chain is on the cytoplasmic side.

As to expression, highly expressed in pancreatic acinar cells. Also expressed in epithelium of the uterus during late pregnancy but not detected in non-pregnant uterus or in a variety of other adult and fetal tissues.

The protein localises to the zymogen granule membrane. Its function is as follows. Localized to zymogen granules, where it functions in trypsinogen activation. May indirectly regulate cell motility, cell-cell and cell/extracellular matrix interactions. The chain is CUB and zona pellucida-like domain-containing protein 1 from Mus musculus (Mouse).